The sequence spans 222 residues: Cytochrome b6 (222 aa).

The chain crosses the membrane as a helical span at residues 39–59 (IFYCLGGITLVCFIIQFATGF). Cys42 serves as a coordination point for heme c. Residues His93 and His107 each coordinate heme b. Helical transmembrane passes span 97–117 (ASMM…TGGF), 123–143 (LTWI…VTGY), and 193–213 (LHTF…FLMI). Heme b contacts are provided by His194 and His209.

It belongs to the cytochrome b family. PetB subfamily. The 4 large subunits of the cytochrome b6-f complex are cytochrome b6, subunit IV (17 kDa polypeptide, PetD), cytochrome f and the Rieske protein, while the 4 small subunits are PetG, PetL, PetM and PetN. The complex functions as a dimer. It depends on heme b as a cofactor. The cofactor is heme c.

It localises to the cellular thylakoid membrane. Functionally, component of the cytochrome b6-f complex, which mediates electron transfer between photosystem II (PSII) and photosystem I (PSI), cyclic electron flow around PSI, and state transitions. The protein is Cytochrome b6 of Prochlorothrix hollandica.